Consider the following 331-residue polypeptide: MKKSLIALTLAALPVAAMADVTLYGTIKAGVETSRSVFHQNGQVTEVTTATGIVDLGSKIGFKGQEDLGNGLKAIWQVEQKASIAGTDSGWGNRQSFIGLKGGFGKLRVGRLNSVLKDTGDINPWDSKSDYLGVNKIAEPEARLISVRYDSPEFAGLSGSVQYALNDNAGRHNSESYHAGFNYKNGGFFVQYGGAYKRHHQVQEGLNIEKYQIHRLVSGYDNDALYASVAVQQQDAKLTDASNSHNSQTEVAATLAYRFGNVTPRVSYAHGFKGLVDDADIGNEYDQVVVGAEYDFSKRTSALVSAGWLQEGKGENKFVATAGGVGLRHKF.

A signal peptide spans 1-19 (MKKSLIALTLAALPVAAMA).

It belongs to the Gram-negative porin family. In terms of assembly, homotrimer.

The protein resides in the cell outer membrane. Serves as a slightly cation selective porin. In Neisseria meningitidis serogroup B (strain ATCC BAA-335 / MC58), this protein is Major outer membrane protein P.IB (porB).